Reading from the N-terminus, the 322-residue chain is Ornithine carbamoyltransferase (322 aa).

Residues 67–70 (STRT), Q94, R118, and 145–148 (HPCQ) contribute to the carbamoyl phosphate site. L-ornithine contacts are provided by residues N176, D240, and 244–245 (SM). Residues 280–281 (CL) and R308 contribute to the carbamoyl phosphate site.

This sequence belongs to the aspartate/ornithine carbamoyltransferase superfamily. OTCase family.

It localises to the cytoplasm. The catalysed reaction is carbamoyl phosphate + L-ornithine = L-citrulline + phosphate + H(+). It functions in the pathway amino-acid biosynthesis; L-arginine biosynthesis; L-arginine from L-ornithine and carbamoyl phosphate: step 1/3. Its function is as follows. Reversibly catalyzes the transfer of the carbamoyl group from carbamoyl phosphate (CP) to the N(epsilon) atom of ornithine (ORN) to produce L-citrulline. The polypeptide is Ornithine carbamoyltransferase (Oceanobacillus iheyensis (strain DSM 14371 / CIP 107618 / JCM 11309 / KCTC 3954 / HTE831)).